We begin with the raw amino-acid sequence, 341 residues long: Anthranilate phosphoribosyltransferase (341 aa).

5-phospho-alpha-D-ribose 1-diphosphate contacts are provided by residues G79, G82 to D83, T87, N89 to T92, K107 to S115, and S119. G79 is a binding site for anthranilate. Mg(2+) is bound at residue S91. An anthranilate-binding site is contributed by N110. R165 serves as a coordination point for anthranilate. Residues D224 and E225 each coordinate Mg(2+).

This sequence belongs to the anthranilate phosphoribosyltransferase family. Homodimer. Requires Mg(2+) as cofactor.

The enzyme catalyses N-(5-phospho-beta-D-ribosyl)anthranilate + diphosphate = 5-phospho-alpha-D-ribose 1-diphosphate + anthranilate. Its pathway is amino-acid biosynthesis; L-tryptophan biosynthesis; L-tryptophan from chorismate: step 2/5. In terms of biological role, catalyzes the transfer of the phosphoribosyl group of 5-phosphorylribose-1-pyrophosphate (PRPP) to anthranilate to yield N-(5'-phosphoribosyl)-anthranilate (PRA). The protein is Anthranilate phosphoribosyltransferase of Bacillus cereus (strain ATCC 14579 / DSM 31 / CCUG 7414 / JCM 2152 / NBRC 15305 / NCIMB 9373 / NCTC 2599 / NRRL B-3711).